A 90-amino-acid chain; its full sequence is Putative beta-neurotoxin RjAa14F (90 aa).

An N-terminal signal peptide occupies residues 1–18; it reads MKILIFIIASFMLIGVEC. In terms of domain architecture, LCN-type CS-alpha/beta spans 19–89; it reads KEGYPTNSEG…VWDPNNNKCV (71 aa). 4 disulfides stabilise this stretch: cysteine 29/cysteine 88, cysteine 33/cysteine 62, cysteine 40/cysteine 69, and cysteine 44/cysteine 71.

It belongs to the long (4 C-C) scorpion toxin superfamily. Sodium channel inhibitor family. Beta subfamily. As to expression, expressed by the venom gland.

It is found in the secreted. Beta toxins bind voltage-independently at site-4 of sodium channels (Nav) and shift the voltage of activation toward more negative potentials thereby affecting sodium channel activation and promoting spontaneous and repetitive firing. The chain is Putative beta-neurotoxin RjAa14F from Rhopalurus junceus (Caribbean blue scorpion).